Here is a 427-residue protein sequence, read N- to C-terminus: Glutamate-1-semialdehyde 2,1-aminomutase (427 aa).

An N6-(pyridoxal phosphate)lysine modification is found at K268.

The protein belongs to the class-III pyridoxal-phosphate-dependent aminotransferase family. HemL subfamily. It depends on pyridoxal 5'-phosphate as a cofactor.

It is found in the cytoplasm. It catalyses the reaction (S)-4-amino-5-oxopentanoate = 5-aminolevulinate. The protein operates within porphyrin-containing compound metabolism; protoporphyrin-IX biosynthesis; 5-aminolevulinate from L-glutamyl-tRNA(Glu): step 2/2. The chain is Glutamate-1-semialdehyde 2,1-aminomutase from Methanococcus vannielii (strain ATCC 35089 / DSM 1224 / JCM 13029 / OCM 148 / SB).